Here is a 407-residue protein sequence, read N- to C-terminus: Naringenin 8-dimethylallyltransferase 2, chloroplastic (407 aa).

The N-terminal 23 residues, 1–23 (MGFVLPASFPGASSITTGGSCLR), are a transit peptide targeting the chloroplast. Helical transmembrane passes span 117–137 (FCRPYAIFSVVLGATFKSLVA), 145–165 (SLAFFIGWLQVVVAVICIHIF), 206–226 (ILGLGFAWIVGSWPLFWTVFI), 248–268 (VLTAISFIANVAVTRSLGFFL), 285–305 (LIFCTAIVSIYAIVIALFKDI), 328–348 (VFWICVSLLEMAYGVTILVGA), 352–372 (ILWSKIITVLGHAILASVLWY), and 383–403 (VVLQSFYMFIWKLHTAEYCLI).

It belongs to the UbiA prenyltransferase family. Mg(2+) is required as a cofactor. The cofactor is Mn(2+).

The protein localises to the plastid. Its subcellular location is the chloroplast membrane. It carries out the reaction (2S)-naringenin + dimethylallyl diphosphate = sophoraflavanone B + diphosphate. Functionally, involved in the biosynthesis of sophoraflavanone G (SFG). Can use flavanones (naringenin, liquiritigenin and hesperetin) as substrates, but not flavonols or isoflavones. Shows a strict specificity for dimethylallyl diphosphate. The polypeptide is Naringenin 8-dimethylallyltransferase 2, chloroplastic (N8DT-2) (Sophora flavescens (Shrubby sophora)).